The following is a 205-amino-acid chain: Purine catabolism protein PucB (205 aa).

It participates in purine metabolism; hypoxanthine degradation. Functionally, required for xanthine dehydrogenase activity. Could be involved in formation of the molybdenum cofactor required by xanthine dehydrogenase. The chain is Purine catabolism protein PucB (pucB) from Bacillus subtilis (strain 168).